The following is a 283-amino-acid chain: Nudix hydrolase 6 (283 aa).

A Nudix hydrolase domain is found at 101–233 (SHRIGVGAFV…KKELFRFMAN (133 aa)). A Nudix box motif is present at residues 139 to 160 (GVVKEGENIWEGALREVEEETG). 3 residues coordinate a divalent metal cation: E154, E158, and E204.

It belongs to the Nudix hydrolase family. It depends on Mg(2+) as a cofactor. Requires Mn(2+) as cofactor. As to expression, expressed in stems and leaves. Weakly or not expressed in roots.

It catalyses the reaction ADP-D-ribose + H2O = D-ribose 5-phosphate + AMP + 2 H(+). The enzyme catalyses NAD(+) + H2O = beta-nicotinamide D-ribonucleotide + AMP + 2 H(+). The catalysed reaction is NADH + H2O = reduced beta-nicotinamide D-ribonucleotide + AMP + 2 H(+). Functionally, probably mediates the hydrolysis of some nucleoside diphosphate derivatives. In vitro, it can use both NADH and ADP-ribose as substrates; however the relevance of such substrates in vivo is unclear. The sequence is that of Nudix hydrolase 6 from Arabidopsis thaliana (Mouse-ear cress).